A 105-amino-acid chain; its full sequence is 5-hydroxymethyl-dUMP N-hydrolase (105 aa).

Residues Gly-6, Ile-8, Ser-42, Gly-44, Glu-48, and Ser-72 each contribute to the 5-hydroxymethyl-dUMP site.

This sequence belongs to the 2'-deoxynucleoside 5'-phosphate N-hydrolase 1 family. In terms of assembly, monomer and homodimer.

It localises to the cytoplasm. It is found in the nucleus. The enzyme catalyses 5-hydroxymethyl-dUMP + H2O = 5-hydroxymethyluracil + 2-deoxy-D-ribose 5-phosphate. In terms of biological role, part of a nucleotide salvage pathway that eliminates epigenetically modified 5-hydroxymethyl-dCMP (hmdCMP) in a two-step process entailing deamination to cytotoxic 5-hydroxymethyl-dUMP (hmdUMP), followed by its hydrolysis into 5-hydroxymethyluracil (hmU) and 2-deoxy-D-ribose 5-phosphate (deoxyribosephosphate). Catalyzes the second step in that pathway, the hydrolysis of the N-glycosidic bond in hmdUMP, degrading this cytotoxic nucleotide to avoid its genomic integration. The protein is 5-hydroxymethyl-dUMP N-hydrolase of Branchiostoma floridae (Florida lancelet).